We begin with the raw amino-acid sequence, 204 residues long: Peptide deformylase (204 aa).

The Fe cation site is built by cysteine 131 and histidine 174. Glutamate 175 is a catalytic residue. Residue histidine 178 coordinates Fe cation.

It belongs to the polypeptide deformylase family. Fe(2+) is required as a cofactor.

It carries out the reaction N-terminal N-formyl-L-methionyl-[peptide] + H2O = N-terminal L-methionyl-[peptide] + formate. Removes the formyl group from the N-terminal Met of newly synthesized proteins. Requires at least a dipeptide for an efficient rate of reaction. N-terminal L-methionine is a prerequisite for activity but the enzyme has broad specificity at other positions. In Streptococcus agalactiae serotype III (strain NEM316), this protein is Peptide deformylase.